The chain runs to 200 residues: Cysteine-rich venom protein VAR8 (200 aa).

The first 22 residues, 1–22 (MILLKLYLTLAAILCQSRGTTS), serve as a signal peptide directing secretion. The SCP domain occupies 41–169 (NKHNDLRRTV…PLKYFLVCQY (129 aa)). 4 disulfides stabilise this stretch: Cys-77/Cys-156, Cys-95/Cys-170, Cys-151/Cys-167, and Cys-189/Cys-196.

The protein belongs to the CRISP family. In terms of processing, contains 8 disulfide bonds. Expressed by the venom gland.

The protein localises to the secreted. In terms of biological role, blocks ryanodine receptors, and potassium channels. This is Cysteine-rich venom protein VAR8 from Varanus acanthurus (Ridge-tailed monitor).